A 130-amino-acid polypeptide reads, in one-letter code: Fluoride-specific ion channel FluC (130 aa).

4 helical membrane-spanning segments follow: residues Gly2–Leu22, Gly36–Ile56, Phe71–Ile91, and Ile100–Leu120. Na(+) is bound by residues Gly79 and Thr82.

The protein belongs to the fluoride channel Fluc/FEX (TC 1.A.43) family.

It is found in the cell inner membrane. The catalysed reaction is fluoride(in) = fluoride(out). Na(+) is not transported, but it plays an essential structural role and its presence is essential for fluoride channel function. Its function is as follows. Fluoride-specific ion channel. Important for reducing fluoride concentration in the cell, thus reducing its toxicity. This Francisella tularensis subsp. mediasiatica (strain FSC147) protein is Fluoride-specific ion channel FluC.